The primary structure comprises 246 residues: 5'-nucleotidase SurE (246 aa).

A divalent metal cation-binding residues include aspartate 8, aspartate 9, serine 39, and asparagine 91.

It belongs to the SurE nucleotidase family. It depends on a divalent metal cation as a cofactor.

Its subcellular location is the cytoplasm. The enzyme catalyses a ribonucleoside 5'-phosphate + H2O = a ribonucleoside + phosphate. Nucleotidase that shows phosphatase activity on nucleoside 5'-monophosphates. This Mannheimia succiniciproducens (strain KCTC 0769BP / MBEL55E) protein is 5'-nucleotidase SurE.